The chain runs to 157 residues: MKESILDVLLYLFEHYFSEDADLVRDRDSLQNGLIQAGFSPAEISKAFDWLDALSEQRPSVARPHVDGPVRIYHGQELDKLDVDCRGFLLFLEQHRILDADQRELVLDRAMALDQDELDLDDLKWVVLMVLFNQPGAEAAYAWMETQMFLDEPEPVH.

The protein belongs to the Smg family.

This is Protein Smg homolog from Xanthomonas oryzae pv. oryzae (strain MAFF 311018).